Here is a 448-residue protein sequence, read N- to C-terminus: Vicilin Cor a 11.0101 (448 aa).

A compositionally biased stretch (basic and acidic residues) spans 1 to 44 (MLPKEDPELKKCKHKCRDERQFDEQQRRDGKQICEEKARERQQE). The disordered stretch occupies residues 1-66 (MLPKEDPELK…QEENPYVFQD (66 aa)). N-linked (GlcNAc...) asparagine glycosylation occurs at Asn-47. Cupin type-1 domains follow at residues 84–220 (ENFT…EQLE) and 263–418 (INLL…REVE). Residue Asn-301 is glycosylated (N-linked (GlcNAc...) asparagine). Residues Cys-333, His-335, and His-362 each contribute to the Cu cation site.

The protein belongs to the 7S seed storage protein family. As to quaternary structure, homotrimer. Homohexamer. Post-translationally, N-glycosylated at Asn-301 mostly with xylosylated paucimannosidic-type N-glycan MMX (an N-linked glycan with beta-1,2-xylose residue in the structure) and also with MMXF (a complex N-linked glycan with alpha-1,3-fucose and beta-1,2-xylose residues in the structure). In terms of processing, a mixture of proteolytically processed and unprocessed subunits exist. As to expression, expressed in seed (at protein level). Expressed in seed.

Functionally, seed storage protein. Does not have superoxide dismutase (SOD) activity. The sequence is that of Vicilin Cor a 11.0101 from Corylus avellana (European hazel).